The sequence spans 551 residues: Hydroxylamine reductase (551 aa).

Residues C3, C6, C18, and C25 each contribute to the [2Fe-2S] cluster site. Residues H249, E273, C317, C405, C433, C459, E493, and K495 each contribute to the hybrid [4Fe-2O-2S] cluster site. Cysteine persulfide is present on C405.

This sequence belongs to the HCP family. Requires [2Fe-2S] cluster as cofactor. It depends on hybrid [4Fe-2O-2S] cluster as a cofactor.

Its subcellular location is the cytoplasm. It carries out the reaction A + NH4(+) + H2O = hydroxylamine + AH2 + H(+). In terms of biological role, catalyzes the reduction of hydroxylamine to form NH(3) and H(2)O. The sequence is that of Hydroxylamine reductase from Actinobacillus pleuropneumoniae serotype 5b (strain L20).